A 79-amino-acid chain; its full sequence is Dermaseptin-S8 (79 aa).

The signal sequence occupies residues 1-22 (MDILKKSLFLVLFLGLVSLSIC). Residues 23–45 (EEEKRENEDEEKQEDDEQSEMKR) constitute a propeptide that is removed on maturation. Position 76 is a glutamine amide (Gln76). Residues 78-79 (AQ) constitute a propeptide that is removed on maturation.

It belongs to the frog skin active peptide (FSAP) family. Dermaseptin subfamily. As to expression, expressed by the skin glands.

Its subcellular location is the secreted. Its function is as follows. Potent antimicrobial peptide with activity against bacteria, fungi and protozoa. Probably acts by disturbing membrane functions with its amphipathic structure. The chain is Dermaseptin-S8 from Phyllomedusa sauvagei (Sauvage's leaf frog).